The primary structure comprises 188 residues: Adenine phosphoribosyltransferase (188 aa).

Belongs to the purine/pyrimidine phosphoribosyltransferase family. As to quaternary structure, homodimer.

It is found in the cytoplasm. It catalyses the reaction AMP + diphosphate = 5-phospho-alpha-D-ribose 1-diphosphate + adenine. The protein operates within purine metabolism; AMP biosynthesis via salvage pathway; AMP from adenine: step 1/1. In terms of biological role, catalyzes a salvage reaction resulting in the formation of AMP, that is energically less costly than de novo synthesis. The polypeptide is Adenine phosphoribosyltransferase (Burkholderia cenocepacia (strain HI2424)).